Here is a 338-residue protein sequence, read N- to C-terminus: D-erythrose-4-phosphate dehydrogenase (338 aa).

11-12 (RI) serves as a coordination point for NAD(+). Substrate-binding positions include 153 to 155 (SCT), Arg199, 212 to 213 (TK), and Arg235. Cys154 acts as the Nucleophile in catalysis. Position 317 (Asn317) interacts with NAD(+).

This sequence belongs to the glyceraldehyde-3-phosphate dehydrogenase family. Epd subfamily. In terms of assembly, homotetramer.

It is found in the cytoplasm. It carries out the reaction D-erythrose 4-phosphate + NAD(+) + H2O = 4-phospho-D-erythronate + NADH + 2 H(+). It functions in the pathway cofactor biosynthesis; pyridoxine 5'-phosphate biosynthesis; pyridoxine 5'-phosphate from D-erythrose 4-phosphate: step 1/5. Its function is as follows. Catalyzes the NAD-dependent conversion of D-erythrose 4-phosphate to 4-phosphoerythronate. The sequence is that of D-erythrose-4-phosphate dehydrogenase from Shewanella piezotolerans (strain WP3 / JCM 13877).